Reading from the N-terminus, the 244-residue chain is MNIDLNADLGEGCASDSELLTLVSSANIACGFHAGDAQTMLTCVREALKNGVAIGAHPSFPDRDNFGRTAMVLPPETVYAQTLYQIGALGAIVQAQGGVMRHVKPHGMLYNQAAKDPHLAQAIAKAVHDYDPSLILVGLAGSELIRAGERHRLVTRQEVFADRGYQADGSLVPRMQPGALIHDEEQALAQTLDMVQAGRVKSVTGVWTTVTAQTVCIHGDGEYALAFARRLRAAFNARNVHVIA.

Belongs to the LamB/PxpA family. As to quaternary structure, forms a complex composed of PxpA, PxpB and PxpC.

The enzyme catalyses 5-oxo-L-proline + ATP + 2 H2O = L-glutamate + ADP + phosphate + H(+). Catalyzes the cleavage of 5-oxoproline to form L-glutamate coupled to the hydrolysis of ATP to ADP and inorganic phosphate. The chain is 5-oxoprolinase subunit A from Salmonella typhi.